Here is a 144-residue protein sequence, read N- to C-terminus: Small ribosomal subunit protein uS19 (144 aa).

This sequence belongs to the universal ribosomal protein uS19 family.

Its function is as follows. Protein S19 forms a complex with S13 that binds strongly to the 16S ribosomal RNA. The sequence is that of Small ribosomal subunit protein uS19 from Hyperthermus butylicus (strain DSM 5456 / JCM 9403 / PLM1-5).